The following is a 123-amino-acid chain: KxDL motif-containing protein LO9-177 (123 aa).

Positions 78–81 (KDDL) match the KxDL motif.

Belongs to the KXD1 family. Homodimer. Component of a nuclear cell elongation controlling complex made of ILI5/BUL1, LO9-177 and BC1. Binds directly to ILI5/BUL1, ILI4/BU1, BUL2 and BUL3. Binds to BC1 in the nucleus. Interacts with BCL1.

The protein localises to the nucleus. It is found in the cytoplasm. In terms of biological role, contributes, together with ILI5/BUL1 and BC1, to the promotion of leaf inclination and grain size by modulating cell elongation. The sequence is that of KxDL motif-containing protein LO9-177 from Oryza sativa subsp. indica (Rice).